The sequence spans 370 residues: tRNA 2-selenouridine synthase (370 aa).

The Rhodanese domain occupies 12–136; that stretch reads FLDDVPMMDM…MRTFLLETTQ (125 aa). Cys95 acts as the S-selanylcysteine intermediate in catalysis.

It belongs to the SelU family. As to quaternary structure, monomer.

The enzyme catalyses 5-methylaminomethyl-2-thiouridine(34) in tRNA + selenophosphate + (2E)-geranyl diphosphate + H2O + H(+) = 5-methylaminomethyl-2-selenouridine(34) in tRNA + (2E)-thiogeraniol + phosphate + diphosphate. The catalysed reaction is 5-methylaminomethyl-2-thiouridine(34) in tRNA + (2E)-geranyl diphosphate = 5-methylaminomethyl-S-(2E)-geranyl-thiouridine(34) in tRNA + diphosphate. It carries out the reaction 5-methylaminomethyl-S-(2E)-geranyl-thiouridine(34) in tRNA + selenophosphate + H(+) = 5-methylaminomethyl-2-(Se-phospho)selenouridine(34) in tRNA + (2E)-thiogeraniol. It catalyses the reaction 5-methylaminomethyl-2-(Se-phospho)selenouridine(34) in tRNA + H2O = 5-methylaminomethyl-2-selenouridine(34) in tRNA + phosphate. In terms of biological role, involved in the post-transcriptional modification of the uridine at the wobble position (U34) of tRNA(Lys), tRNA(Glu) and tRNA(Gln). Catalyzes the conversion of 2-thiouridine (S2U-RNA) to 2-selenouridine (Se2U-RNA). Acts in a two-step process involving geranylation of 2-thiouridine (S2U) to S-geranyl-2-thiouridine (geS2U) and subsequent selenation of the latter derivative to 2-selenouridine (Se2U) in the tRNA chain. This Pseudomonas putida (strain ATCC 700007 / DSM 6899 / JCM 31910 / BCRC 17059 / LMG 24140 / F1) protein is tRNA 2-selenouridine synthase.